The chain runs to 505 residues: Glutamyl-tRNA(Gln) amidotransferase subunit A, mitochondrial (505 aa).

Catalysis depends on charge relay system residues Lys-76 and Ser-158. Ser-182 functions as the Acyl-ester intermediate in the catalytic mechanism.

The protein belongs to the amidase family. GatA subfamily. As to quaternary structure, subunit of the heterotrimeric GatCAB amidotransferase (AdT) complex, composed of A, B and C subunits.

The protein localises to the mitochondrion. It carries out the reaction L-glutamyl-tRNA(Gln) + L-glutamine + ATP + H2O = L-glutaminyl-tRNA(Gln) + L-glutamate + ADP + phosphate + H(+). In terms of biological role, allows the formation of correctly charged Gln-tRNA(Gln) through the transamidation of misacylated Glu-tRNA(Gln) in the mitochondria. The reaction takes place in the presence of glutamine and ATP through an activated gamma-phospho-Glu-tRNA(Gln). This chain is Glutamyl-tRNA(Gln) amidotransferase subunit A, mitochondrial, found in Ixodes scapularis (Black-legged tick).